The primary structure comprises 243 residues: Thaumatin-like protein (243 aa).

The signal sequence occupies residues 1-20 (MASINLFLFAFLLLLSHASA). Disulfide bonds link Cys29-Cys238, Cys77-Cys87, Cys92-Cys98, Cys144-Cys228, Cys149-Cys211, Cys157-Cys174, Cys178-Cys187, and Cys188-Cys198.

Belongs to the thaumatin family.

The protein is Thaumatin-like protein of Arabidopsis thaliana (Mouse-ear cress).